Reading from the N-terminus, the 314-residue chain is Small ribosomal subunit biogenesis GTPase RsgA (314 aa).

The disordered stretch occupies residues 1–21 (MKRAPTKQPAKPAARGGERAQ). A CP-type G domain is found at 85–246 (SDQFKSKLFA…LIDSPGFQEF (162 aa)). GTP is bound by residues 134–137 (NKID) and 188–196 (GQSGMGKST). Residues Cys270, Cys275, His277, and Cys283 each contribute to the Zn(2+) site.

The protein belongs to the TRAFAC class YlqF/YawG GTPase family. RsgA subfamily. In terms of assembly, monomer. Associates with 30S ribosomal subunit, binds 16S rRNA. Zn(2+) serves as cofactor.

The protein resides in the cytoplasm. Its function is as follows. One of several proteins that assist in the late maturation steps of the functional core of the 30S ribosomal subunit. Helps release RbfA from mature subunits. May play a role in the assembly of ribosomal proteins into the subunit. Circularly permuted GTPase that catalyzes slow GTP hydrolysis, GTPase activity is stimulated by the 30S ribosomal subunit. In Burkholderia pseudomallei (strain 1710b), this protein is Small ribosomal subunit biogenesis GTPase RsgA.